Reading from the N-terminus, the 165-residue chain is Small ribosomal subunit protein uS5 (165 aa).

In terms of domain architecture, S5 DRBM spans 10–73 (LVEKLVSVDR…EAAKRNMITV (64 aa)).

Belongs to the universal ribosomal protein uS5 family. As to quaternary structure, part of the 30S ribosomal subunit. Contacts proteins S4 and S8.

Functionally, with S4 and S12 plays an important role in translational accuracy. In terms of biological role, located at the back of the 30S subunit body where it stabilizes the conformation of the head with respect to the body. This Psychrobacter sp. (strain PRwf-1) protein is Small ribosomal subunit protein uS5.